Here is a 309-residue protein sequence, read N- to C-terminus: Elongation factor Ts (309 aa).

The involved in Mg(2+) ion dislocation from EF-Tu stretch occupies residues 82–85 (TDFV).

This sequence belongs to the EF-Ts family.

The protein resides in the cytoplasm. Its function is as follows. Associates with the EF-Tu.GDP complex and induces the exchange of GDP to GTP. It remains bound to the aminoacyl-tRNA.EF-Tu.GTP complex up to the GTP hydrolysis stage on the ribosome. This is Elongation factor Ts from Rickettsia massiliae (strain Mtu5).